Reading from the N-terminus, the 588-residue chain is BTB/POZ domain-containing protein At3g26490 (588 aa).

The region spanning 28–99 is the BTB domain; the sequence is NDLVIQVKST…CYGITITLCA (72 aa). The NPH3 domain occupies 218–507; that stretch reads RWWGEDLAEL…VQILFVEQAR (290 aa). A phosphoserine mark is found at Ser376 and Ser378. At Tyr448 the chain carries Phosphotyrosine. The disordered stretch occupies residues 529–554; the sequence is FTTRREEGGQEEEERDETKPSGGFLQ.

This sequence belongs to the NPH3 family.

Its pathway is protein modification; protein ubiquitination. Functionally, may act as a substrate-specific adapter of an E3 ubiquitin-protein ligase complex (CUL3-RBX1-BTB) which mediates the ubiquitination and subsequent proteasomal degradation of target proteins. This chain is BTB/POZ domain-containing protein At3g26490, found in Arabidopsis thaliana (Mouse-ear cress).